Consider the following 873-residue polypeptide: Tyrosine-protein kinase transforming protein Fps (873 aa).

The interval 1–46 is disordered; the sequence is ASGQLHRPQPQEHTSTSAAAGTWRLTQASESRHRLPHCSAAPSHQD. Positions 11 to 29 are enriched in polar residues; that stretch reads QEHTSTSAAAGTWRLTQAS. Residues 50–313 form the F-BAR domain; it reads MGFGPELWCP…AVEMIDPATE (264 aa). Residues 445-471 are disordered; that stretch reads GSEEPPPALPLQEDRQSARSTDQERSG. The segment covering 456–469 has biased composition (basic and acidic residues); sequence QEDRQSARSTDQER. The SH2 domain maps to 511–600; the sequence is WYHGAIPRSE…KSGIVLTRAV (90 aa). Residues 612–865 enclose the Protein kinase domain; the sequence is VLLGERIGRG…PSFGAVHQDL (254 aa). ATP is bound by residues 618 to 626 and K641; that span reads IGRGNFGEV. The Proton acceptor role is filled by D734. Phosphotyrosine; by autocatalysis is present on Y764.

It belongs to the protein kinase superfamily. Tyr protein kinase family. Fes/fps subfamily.

The catalysed reaction is L-tyrosyl-[protein] + ATP = O-phospho-L-tyrosyl-[protein] + ADP + H(+). In Gallus gallus (Chicken), this protein is Tyrosine-protein kinase transforming protein Fps (V-FPS).